Here is a 95-residue protein sequence, read N- to C-terminus: Aspartyl/glutamyl-tRNA(Asn/Gln) amidotransferase subunit C (95 aa).

Belongs to the GatC family. As to quaternary structure, heterotrimer of A, B and C subunits.

It carries out the reaction L-glutamyl-tRNA(Gln) + L-glutamine + ATP + H2O = L-glutaminyl-tRNA(Gln) + L-glutamate + ADP + phosphate + H(+). The enzyme catalyses L-aspartyl-tRNA(Asn) + L-glutamine + ATP + H2O = L-asparaginyl-tRNA(Asn) + L-glutamate + ADP + phosphate + 2 H(+). Allows the formation of correctly charged Asn-tRNA(Asn) or Gln-tRNA(Gln) through the transamidation of misacylated Asp-tRNA(Asn) or Glu-tRNA(Gln) in organisms which lack either or both of asparaginyl-tRNA or glutaminyl-tRNA synthetases. The reaction takes place in the presence of glutamine and ATP through an activated phospho-Asp-tRNA(Asn) or phospho-Glu-tRNA(Gln). The sequence is that of Aspartyl/glutamyl-tRNA(Asn/Gln) amidotransferase subunit C from Campylobacter lari (strain RM2100 / D67 / ATCC BAA-1060).